The chain runs to 81 residues: Photosystem I iron-sulfur center (81 aa).

2 4Fe-4S ferredoxin-type domains span residues 2 to 31 and 39 to 68; these read AHIV…MVPW and MASA…VRVY. [4Fe-4S] cluster is bound by residues C11, C14, C17, C21, C48, C51, C54, and C58.

The eukaryotic PSI reaction center is composed of at least 11 subunits. The cofactor is [4Fe-4S] cluster.

The protein resides in the plastid. It localises to the chloroplast thylakoid membrane. It catalyses the reaction reduced [plastocyanin] + hnu + oxidized [2Fe-2S]-[ferredoxin] = oxidized [plastocyanin] + reduced [2Fe-2S]-[ferredoxin]. Its function is as follows. Apoprotein for the two 4Fe-4S centers FA and FB of photosystem I (PSI); essential for photochemical activity. FB is the terminal electron acceptor of PSI, donating electrons to ferredoxin. The C-terminus interacts with PsaA/B/D and helps assemble the protein into the PSI complex. Required for binding of PsaD and PsaE to PSI. PSI is a plastocyanin/cytochrome c6-ferredoxin oxidoreductase, converting photonic excitation into a charge separation, which transfers an electron from the donor P700 chlorophyll pair to the spectroscopically characterized acceptors A0, A1, FX, FA and FB in turn. The protein is Photosystem I iron-sulfur center of Chlamydomonas reinhardtii (Chlamydomonas smithii).